A 413-amino-acid chain; its full sequence is Gamma-glutamyl phosphate reductase (413 aa).

The protein belongs to the gamma-glutamyl phosphate reductase family.

It localises to the cytoplasm. It carries out the reaction L-glutamate 5-semialdehyde + phosphate + NADP(+) = L-glutamyl 5-phosphate + NADPH + H(+). The protein operates within amino-acid biosynthesis; L-proline biosynthesis; L-glutamate 5-semialdehyde from L-glutamate: step 2/2. Catalyzes the NADPH-dependent reduction of L-glutamate 5-phosphate into L-glutamate 5-semialdehyde and phosphate. The product spontaneously undergoes cyclization to form 1-pyrroline-5-carboxylate. In Lactococcus lactis subsp. lactis (strain IL1403) (Streptococcus lactis), this protein is Gamma-glutamyl phosphate reductase.